The primary structure comprises 376 residues: Protein-tyrosine sulfotransferase 2 (376 aa).

The Cytoplasmic portion of the chain corresponds to methionine 1–valine 8. Residues leucine 9–glycine 25 traverse the membrane as a helical; Signal-anchor for type II membrane protein segment. Residues glutamine 26–serine 376 lie on the Lumenal side of the membrane. Arginine 77 to threonine 81 contributes to the 3'-phosphoadenylyl sulfate binding site. Cysteine 95 and cysteine 155 are joined by a disulfide. Glutamate 98 functions as the Proton donor/acceptor in the catalytic mechanism. Residues arginine 100–arginine 104 form an interaction with peptide substrate region. The 3'-phosphoadenylyl sulfate site is built by arginine 182, serine 190, and arginine 194. A disulfide bridge connects residues cysteine 224 and cysteine 232. 3'-phosphoadenylyl sulfate is bound by residues tyrosine 237, serine 284–asparagine 293, and lysine 299. 2 N-linked (GlcNAc...) asparagine glycosylation sites follow: asparagine 342 and asparagine 367.

The protein belongs to the protein sulfotransferase family. Homodimer. Can also form heterodimers with TPST1. N-glycosylated. In terms of tissue distribution, widely expressed.

It is found in the golgi apparatus membrane. It catalyses the reaction L-tyrosyl-[protein] + 3'-phosphoadenylyl sulfate = O-sulfo-L-tyrosine-[protein] + adenosine 3',5'-bisphosphate + H(+). Functionally, catalyzes the O-sulfation of tyrosine residues within acidic motifs of polypeptides, using 3'-phosphoadenylyl sulfate (PAPS) as cosubstrate. In Mus musculus (Mouse), this protein is Protein-tyrosine sulfotransferase 2 (Tpst2).